The chain runs to 267 residues: Glutamate 5-kinase (267 aa).

Lysine 14 is a binding site for ATP. Positions 54, 141, and 157 each coordinate substrate. ATP is bound by residues 177-178 (SD) and 219-225 (TGGMMSK).

Belongs to the glutamate 5-kinase family.

The protein resides in the cytoplasm. The enzyme catalyses L-glutamate + ATP = L-glutamyl 5-phosphate + ADP. It participates in amino-acid biosynthesis; L-proline biosynthesis; L-glutamate 5-semialdehyde from L-glutamate: step 1/2. In terms of biological role, catalyzes the transfer of a phosphate group to glutamate to form L-glutamate 5-phosphate. The sequence is that of Glutamate 5-kinase from Streptococcus thermophilus (strain CNRZ 1066).